Here is a 90-residue protein sequence, read N- to C-terminus: Small ribosomal subunit protein uS15c (90 aa).

This sequence belongs to the universal ribosomal protein uS15 family. In terms of assembly, part of the 30S ribosomal subunit.

The protein localises to the plastid. It localises to the chloroplast. This is Small ribosomal subunit protein uS15c (rps15) from Lotus japonicus (Lotus corniculatus var. japonicus).